The chain runs to 279 residues: DegV domain-containing protein SA1258 (279 aa).

Residues Q4–K278 enclose the DegV domain. Hexadecanoate is bound by residues T61 and S93.

In terms of biological role, may bind long-chain fatty acids, such as palmitate, and may play a role in lipid transport or fatty acid metabolism. This chain is DegV domain-containing protein SA1258, found in Staphylococcus aureus (strain N315).